Here is a 502-residue protein sequence, read N- to C-terminus: ATP synthase subunit alpha (502 aa).

Residue 169–176 (GDRQTGKT) participates in ATP binding.

It belongs to the ATPase alpha/beta chains family. In terms of assembly, F-type ATPases have 2 components, CF(1) - the catalytic core - and CF(0) - the membrane proton channel. CF(1) has five subunits: alpha(3), beta(3), gamma(1), delta(1), epsilon(1). CF(0) has three main subunits: a(1), b(2) and c(9-12). The alpha and beta chains form an alternating ring which encloses part of the gamma chain. CF(1) is attached to CF(0) by a central stalk formed by the gamma and epsilon chains, while a peripheral stalk is formed by the delta and b chains. The F(1)F(0) complex interacts with SpoIIIJ and YqjG; YqgA is found in the same complex.

Its subcellular location is the cell membrane. It is found in the membrane raft. It carries out the reaction ATP + H2O + 4 H(+)(in) = ADP + phosphate + 5 H(+)(out). Produces ATP from ADP in the presence of a proton gradient across the membrane. The alpha chain is a regulatory subunit. The polypeptide is ATP synthase subunit alpha (Bacillus subtilis (strain 168)).